The following is a 200-amino-acid chain: ATP synthase subunit b 1 (200 aa).

The chain crosses the membrane as a helical span at residues 14–34 (AAVIVVVSLMAFCCAGFAVAA).

Belongs to the ATPase B chain family. As to quaternary structure, F-type ATPases have 2 components, F(1) - the catalytic core - and F(0) - the membrane proton channel. F(1) has five subunits: alpha(3), beta(3), gamma(1), delta(1), epsilon(1). F(0) has three main subunits: a(1), b(2) and c(10-14). The alpha and beta chains form an alternating ring which encloses part of the gamma chain. F(1) is attached to F(0) by a central stalk formed by the gamma and epsilon chains, while a peripheral stalk is formed by the delta and b chains.

The protein localises to the cell inner membrane. In terms of biological role, f(1)F(0) ATP synthase produces ATP from ADP in the presence of a proton or sodium gradient. F-type ATPases consist of two structural domains, F(1) containing the extramembraneous catalytic core and F(0) containing the membrane proton channel, linked together by a central stalk and a peripheral stalk. During catalysis, ATP synthesis in the catalytic domain of F(1) is coupled via a rotary mechanism of the central stalk subunits to proton translocation. Component of the F(0) channel, it forms part of the peripheral stalk, linking F(1) to F(0). The sequence is that of ATP synthase subunit b 1 from Desulfosudis oleivorans (strain DSM 6200 / JCM 39069 / Hxd3) (Desulfococcus oleovorans).